A 256-amino-acid polypeptide reads, in one-letter code: Ubiquinone/menaquinone biosynthesis C-methyltransferase UbiE (256 aa).

S-adenosyl-L-methionine is bound by residues T79, D100, and 128 to 129 (DA).

The protein belongs to the class I-like SAM-binding methyltransferase superfamily. MenG/UbiE family.

The enzyme catalyses a 2-demethylmenaquinol + S-adenosyl-L-methionine = a menaquinol + S-adenosyl-L-homocysteine + H(+). The catalysed reaction is a 2-methoxy-6-(all-trans-polyprenyl)benzene-1,4-diol + S-adenosyl-L-methionine = a 5-methoxy-2-methyl-3-(all-trans-polyprenyl)benzene-1,4-diol + S-adenosyl-L-homocysteine + H(+). It participates in quinol/quinone metabolism; menaquinone biosynthesis; menaquinol from 1,4-dihydroxy-2-naphthoate: step 2/2. Its pathway is cofactor biosynthesis; ubiquinone biosynthesis. In terms of biological role, methyltransferase required for the conversion of demethylmenaquinol (DMKH2) to menaquinol (MKH2) and the conversion of 2-polyprenyl-6-methoxy-1,4-benzoquinol (DDMQH2) to 2-polyprenyl-3-methyl-6-methoxy-1,4-benzoquinol (DMQH2). This is Ubiquinone/menaquinone biosynthesis C-methyltransferase UbiE from Pseudomonas syringae pv. tomato (strain ATCC BAA-871 / DC3000).